The following is a 326-amino-acid chain: Siroheme decarboxylase NirDL subunit (326 aa).

Belongs to the Ahb/Nir family. Forms a complex composed of NirDL, NirG and NirH. All proteins are required for the total conversion of siroheme to didecarboxysiroheme.

It catalyses the reaction siroheme + 2 H(+) = 12,18-didecarboxysiroheme + 2 CO2. It participates in porphyrin-containing compound metabolism. In terms of biological role, involved in heme d1 biosynthesis. Catalyzes the decarboxylation of siroheme into didecarboxysiroheme. Siroheme is probably decarboxylated to monodecarboxysiroheme, which is in turn decarboxylated to didecarboxysiroheme. The polypeptide is Siroheme decarboxylase NirDL subunit (Paracoccus pantotrophus (Thiosphaera pantotropha)).